The primary structure comprises 636 residues: Leucine-rich repeat and fibronectin type-III domain-containing protein 4 (636 aa).

Residues 1–16 (MAPPLLLLLLASGAAA) form the signal peptide. In terms of domain architecture, LRRNT spans 17–48 (CPLPCVCQNLSESLSTLCAHRGLLFVPPNVDR). Topologically, residues 17 to 518 (CPLPCVCQNL…LQAHVLGGTL (502 aa)) are extracellular. N25 carries an N-linked (GlcNAc...) asparagine glycan. LRR repeat units follow at residues 49-70 (RTVE…DFRN), 73-94 (GLVD…SFGD), 97-118 (SLRS…SLRG), 121-142 (NLQH…AFDD), 146-169 (SLED…GSMP), 170-191 (ALHT…VFAQ), and 194-215 (QLSR…PLFS). An LRRCT domain is found at 234–280 (NPLHCNCELLWLRRLARPDDLETCASPPTLAGRYFWAVPEGEFSCEP). The 87-residue stretch at 281-367 (PLIARHTQRL…GEATARVELR (87 aa)) folds into the Ig-like domain. C302 and C351 form a disulfide bridge. N333 is a glycosylation site (N-linked (GlcNAc...) asparagine). The Fibronectin type-III domain maps to 405-502 (SEPAVQVTEV…GCAHFSTLPA (98 aa)). The chain crosses the membrane as a helical span at residues 519 to 539 (TVAVGGVLVAALLVFTVALLV). At 540 to 636 (RGRGAGNGRL…SAERLEESVV (97 aa)) the chain is on the cytoplasmic side. The tract at residues 556–585 (VQSQTNGGTSPMPKSHPPRSPPPRPQRSCS) is disordered. The segment covering 569-580 (KSHPPRSPPPRP) has biased composition (pro residues). Phosphoserine is present on residues S585 and S627. Positions 633-636 (ESVV) match the PDZ-binding motif.

This sequence belongs to the LRFN family. As to quaternary structure, forms heteromeric complexes with LRFN1 and LRFN2. Can form heteromeric complexes with LRFN3 and LRFN5. Unable to form homophilic interactions across cell junctions. Interacts with DLG1, DLG2, DLG3 and DLG4. Post-translationally, glycosylated.

The protein resides in the membrane. Promotes neurite outgrowth in hippocampal neurons. May play a role in redistributing DLG4 to the cell periphery. In Rattus norvegicus (Rat), this protein is Leucine-rich repeat and fibronectin type-III domain-containing protein 4 (Lrfn4).